Consider the following 245-residue polypeptide: Biosynthetic peptidoglycan transglycosylase (245 aa).

The chain crosses the membrane as a helical span at residues Val20–Ala42.

This sequence belongs to the glycosyltransferase 51 family.

The protein localises to the cell inner membrane. The enzyme catalyses [GlcNAc-(1-&gt;4)-Mur2Ac(oyl-L-Ala-gamma-D-Glu-L-Lys-D-Ala-D-Ala)](n)-di-trans,octa-cis-undecaprenyl diphosphate + beta-D-GlcNAc-(1-&gt;4)-Mur2Ac(oyl-L-Ala-gamma-D-Glu-L-Lys-D-Ala-D-Ala)-di-trans,octa-cis-undecaprenyl diphosphate = [GlcNAc-(1-&gt;4)-Mur2Ac(oyl-L-Ala-gamma-D-Glu-L-Lys-D-Ala-D-Ala)](n+1)-di-trans,octa-cis-undecaprenyl diphosphate + di-trans,octa-cis-undecaprenyl diphosphate + H(+). It participates in cell wall biogenesis; peptidoglycan biosynthesis. In terms of biological role, peptidoglycan polymerase that catalyzes glycan chain elongation from lipid-linked precursors. This Burkholderia ambifaria (strain MC40-6) protein is Biosynthetic peptidoglycan transglycosylase.